The sequence spans 647 residues: Threonine--tRNA ligase (647 aa).

One can recognise a TGS domain in the interval 1–63 (MEVRVEGQMV…PAGCTGIEPV (63 aa)). Residues 244–535 (DHRKLGRELS…LVENFAGALP (292 aa)) form a catalytic region. Zn(2+) contacts are provided by Cys-336, His-387, and His-512.

This sequence belongs to the class-II aminoacyl-tRNA synthetase family. Homodimer. Zn(2+) serves as cofactor.

It is found in the cytoplasm. It carries out the reaction tRNA(Thr) + L-threonine + ATP = L-threonyl-tRNA(Thr) + AMP + diphosphate + H(+). Catalyzes the attachment of threonine to tRNA(Thr) in a two-step reaction: L-threonine is first activated by ATP to form Thr-AMP and then transferred to the acceptor end of tRNA(Thr). Also edits incorrectly charged L-seryl-tRNA(Thr). The chain is Threonine--tRNA ligase from Desulfovibrio desulfuricans (strain ATCC 27774 / DSM 6949 / MB).